Reading from the N-terminus, the 142-residue chain is Putative 2'-deoxynucleoside 5'-phosphate N-hydrolase 1 (142 aa).

Substrate is bound by residues 4 to 10 (FFSGSIR), Tyr19, His36, Glu82, and 106 to 108 (SAM).

The protein belongs to the 2'-deoxynucleoside 5'-phosphate N-hydrolase 1 family. As to quaternary structure, monomer and homodimer.

The catalysed reaction is a pyrimidine 2'-deoxyribonucleoside 5'-phosphate + H2O = a pyrimidine nucleobase + 2-deoxy-D-ribose 5-phosphate. It carries out the reaction a purine 2'-deoxyribonucleoside 5'-phosphate + H2O = a purine nucleobase + 2-deoxy-D-ribose 5-phosphate. Functionally, catalyzes the cleavage of the N-glycosidic bond of deoxyribonucleoside 5'-monophosphates to yield deoxyribose 5-phosphate and a purine or pyrimidine base. This is Putative 2'-deoxynucleoside 5'-phosphate N-hydrolase 1 from Syntrophotalea carbinolica (strain DSM 2380 / NBRC 103641 / GraBd1) (Pelobacter carbinolicus).